The chain runs to 990 residues: Aminopeptidase Q (990 aa).

Residues 2–13 lie on the Cytoplasmic side of the membrane; the sequence is GPPSSSGFYVSR. The helical; Signal-anchor for type II membrane protein transmembrane segment at 14–34 threads the bilayer; sequence AVALLLAGLVAALLLALAVLA. Topologically, residues 35-990 are lumenal; sequence ALYGHCERVP…RIAAWLRRNT (956 aa). A disordered region spans residues 48 to 91; the sequence is LPGLRDLEAESSPPLRQKPTPTPKPSSARELAVTTTPSNWRPPG. N-linked (GlcNAc...) asparagine glycosylation is found at Asn132 and Asn168. Glu240 serves as a coordination point for substrate. 4 N-linked (GlcNAc...) asparagine glycosylation sites follow: Asn261, Asn288, Asn319, and Asn346. 379–383 serves as a coordination point for substrate; that stretch reads HAMEN. Position 415 (His415) interacts with Zn(2+). Glu416 (proton acceptor) is an active-site residue. The Zn(2+) site is built by His419 and Glu438. The active-site Proton donor is the Tyr503. Residues Asn607 and Asn653 are each glycosylated (N-linked (GlcNAc...) asparagine).

It belongs to the peptidase M1 family. In terms of assembly, homodimer. Requires Zn(2+) as cofactor. Post-translationally, N-glycosylated. As to expression, specifically expressed in placenta and not in other tissues. Mainly found at the cell surface region of the extravillous trophoblasts. Detected on extravillous trophoblasts in the outer layer of the chorion laeve in the fetal membrane Not detected on either fetal amnionic epithelial cells or maternal decidual cells. Also detected in the migrating extravillous trophoblasts in the maternal decidual tissues (at protein level).

It is found in the membrane. Inhibited by bestatin. In terms of biological role, metalloprotease which may be important for placentation by regulating biological activity of key peptides at the embryo-maternal interface. On synthetic substrates it shows a marked preference for Leu-4-methylcoumaryl-7-amide (Leu-MCA) over Met-MCA, Arg-LCA and Lys-LCA. Cleaves the N-terminal amino acid of several peptides such as angiotensin-3, kisspeptin-10 and endokinin C. This chain is Aminopeptidase Q, found in Homo sapiens (Human).